The primary structure comprises 930 residues: Protein ARABIDILLO 1 (930 aa).

The short motif at 3–8 (RRVRRK) is the Nuclear localization signal element. The region spanning 44–90 (FVDWISLPYDTVLQLFTCLNYRDRASLASTCKTWRCLGASSCLWTSL) is the F-box domain. 13 ARM repeats span residues 172–212 (RITS…KHCP), 244–285 (TSNI…TSSQ), 379–418 (PEGLDDFWLNEGAALLLNLMQSSQEDVQERSATGLATFVV), 428–467 (CGRAEAVMKDGGIRLLLELAKSWREGLQSEAAKAIANLSV), 469–508 (ANIAKSVAEEGGIKILAGLAKSMNRLVAEEAAGGLWNLSV), 510–552 (EEHK…NLAA), 554–594 (DKCS…NLAA), 600–639 (NNNAAVGQEAGALEALVQLTKSPHEGVRQEAAGALWNLSF), 641–683 (DKNR…GLSV), 685–724 (EANSVAIGREGGVPPLIALARSEAEDVHETAAGALWNLAF), 726–766 (PGNA…YMFD), 790–831 (LDGA…QVTE), and 835–875 (IQEA…QFTI).

Belongs to the beta-catenin family. In terms of assembly, interacts with SNL1. Interacts with MYB53, MYB92 and MYB93. As to expression, expressed ubiquitously, with higher levels in root tip, pericycle and vasculature.

The protein localises to the nucleus. Its function is as follows. Promotes lateral root initiation and development, independently of auxin (IAA) and abscisis acid (ABA). The sequence is that of Protein ARABIDILLO 1 (FBX5) from Arabidopsis thaliana (Mouse-ear cress).